The primary structure comprises 353 residues: 4-hydroxy-2-oxovalerate aldolase 1 (353 aa).

The Pyruvate carboxyltransferase domain occupies 14–266 (VRMTDTSLRD…KTGIDFFDIA (253 aa)). Residue 22 to 23 (RD) coordinates substrate. Aspartate 23 contacts Mn(2+). The Proton acceptor role is filled by histidine 26. Residues serine 176 and histidine 205 each coordinate substrate. Mn(2+)-binding residues include histidine 205 and histidine 207. Residue tyrosine 296 participates in substrate binding.

It belongs to the 4-hydroxy-2-oxovalerate aldolase family.

The enzyme catalyses (S)-4-hydroxy-2-oxopentanoate = acetaldehyde + pyruvate. The sequence is that of 4-hydroxy-2-oxovalerate aldolase 1 from Mycobacterium sp. (strain KMS).